The sequence spans 204 residues: High frequency lysogenization protein HflD homolog (204 aa).

Belongs to the HflD family.

It localises to the cytoplasm. The protein resides in the cell inner membrane. The chain is High frequency lysogenization protein HflD homolog from Shewanella sediminis (strain HAW-EB3).